A 475-amino-acid polypeptide reads, in one-letter code: Adenylyl cyclase-associated protein 1 (475 aa).

Ala-2 is subject to N-acetylalanine. Phosphotyrosine is present on Tyr-31. Ser-34 carries the post-translational modification Phosphoserine. Lys-81 is subject to N6-acetyllysine. Disordered stretches follow at residues 216 to 255 (ELSG…ASRS) and 278 to 318 (MKTH…TKKE). Residues 218-228 (SGLPSGPSAGS) are compositionally biased toward low complexity. The span at 229-242 (GPPPPPPGPPPPPV) shows a compositional bias: pro residues. Residues 243 to 255 (STSSGSDESASRS) show a composition bias toward low complexity. Residue Lys-287 is modified to N6-methyllysine. Phosphoserine is present on residues Ser-290, Ser-295, and Ser-301. The residue at position 307 (Thr-307) is a Phosphothreonine. Phosphoserine occurs at positions 308 and 310. Residues 313–453 (PATKKEPAVL…EGGDFNEFPV (141 aa)) enclose the C-CAP/cofactor C-like domain. Lys-348 participates in a covalent cross-link: Glycyl lysine isopeptide (Lys-Gly) (interchain with G-Cter in SUMO1).

The protein belongs to the CAP family. In terms of assembly, homodimer. Binds actin monomers.

The protein resides in the cell membrane. In terms of biological role, directly regulates filament dynamics and has been implicated in a number of complex developmental and morphological processes, including mRNA localization and the establishment of cell polarity. The sequence is that of Adenylyl cyclase-associated protein 1 (CAP1) from Pongo abelii (Sumatran orangutan).